We begin with the raw amino-acid sequence, 366 residues long: Transcription factor bHLH74 (366 aa).

Positions 1–11 (MGGESNEGGEM) are enriched in gly residues. Disordered regions lie at residues 1–20 (MGGESNEGGEMGFKHGDDES) and 123–201 (GESS…APKE). 2 stretches are compositionally biased toward basic and acidic residues: residues 123–134 (GESSHEDHHQVS) and 159–170 (KAVEEFQEDPQR). In terms of domain architecture, bHLH spans 212–262 (QATNSHSLAERVRREKISERMRLLQELVPGCNKITGKAVMLDEIINYVQSL).

As to quaternary structure, homodimer. Interacts with IBH1. Binds reversibly to CRY2 after blue light illumination. In terms of tissue distribution, expressed constitutively in roots, leaves, stems, and flowers.

It is found in the nucleus. Its function is as follows. Transcriptional activator involved in cell elongation. Regulates the expression of a subset of genes involved in cell expansion by binding to the G-box motif. Binds to chromatin DNA of the FT gene and promotes its expression, and thus triggers flowering in response to blue light. This chain is Transcription factor bHLH74 (BHLH74), found in Arabidopsis thaliana (Mouse-ear cress).